We begin with the raw amino-acid sequence, 628 residues long: Carbon monoxide dehydrogenase 1 (628 aa).

Positions 44, 52, 53, 56, 61, and 75 each coordinate [4Fe-4S] cluster. Positions 266, 302, 340, 448, 478, and 519 each coordinate [Ni-4Fe-5S] cluster.

The protein belongs to the Ni-containing carbon monoxide dehydrogenase family. As to quaternary structure, homodimer. The cofactor is [4Fe-4S] cluster. It depends on [Ni-4Fe-5S] cluster as a cofactor.

The catalysed reaction is CO + 2 oxidized [2Fe-2S]-[ferredoxin] + H2O = 2 reduced [2Fe-2S]-[ferredoxin] + CO2 + 2 H(+). Functionally, CODH oxidizes carbon monoxide coupled, via CooF, to the reduction of a hydrogen cation by a hydrogenase (possibly CooH). The protein is Carbon monoxide dehydrogenase 1 (cooS1) of Methanosarcina mazei (strain ATCC BAA-159 / DSM 3647 / Goe1 / Go1 / JCM 11833 / OCM 88) (Methanosarcina frisia).